The primary structure comprises 301 residues: Isonocardicin synthase (301 aa).

Monomer.

The enzyme catalyses nocardicin G + S-adenosyl-L-methionine = isonocardicin C + S-methyl-5'-thioadenosine + H(+). The catalysed reaction is nocardicin E + S-adenosyl-L-methionine = isonocardicin A + S-methyl-5'-thioadenosine + H(+). It participates in antibiotic biosynthesis. Involved in the biosynthesis of the beta-lactam antibiotic nocardicin A. In the presence of S-adenosyl-L-methionine (AdoMet), catalyzes the transfer of a 3-amino-3-carboxypropyl group from AdoMet to nocardicin G, forming isonocardicin C. Can also catalyze the transformation of nocardicin E and F to isonocardicin A and B, respectively, but in vivo substrate is probably nocardicin G. This Nocardia uniformis subsp. tsuyamanensis protein is Isonocardicin synthase.